The sequence spans 341 residues: Heme A synthase (341 aa).

Transmembrane regions (helical) follow at residues 8-28 (VIIW…VGGI), 92-112 (FHRF…VYFL), 126-146 (IVLL…VRSG), 160-180 (LHLT…LDLI), 201-221 (AALL…AGLI), 256-276 (VQFV…FLFF), 294-314 (LVVF…YSVP), and 315-335 (LALG…MTYT). Histidine 260 is a heme binding site. Histidine 321 is a heme binding site.

Belongs to the COX15/CtaA family. Type 2 subfamily. Interacts with CtaB. Heme b serves as cofactor.

It localises to the cell membrane. The catalysed reaction is Fe(II)-heme o + 2 A + H2O = Fe(II)-heme a + 2 AH2. It functions in the pathway porphyrin-containing compound metabolism; heme A biosynthesis; heme A from heme O: step 1/1. In terms of biological role, catalyzes the conversion of heme O to heme A by two successive hydroxylations of the methyl group at C8. The first hydroxylation forms heme I, the second hydroxylation results in an unstable dihydroxymethyl group, which spontaneously dehydrates, resulting in the formyl group of heme A. The sequence is that of Heme A synthase from Flavobacterium johnsoniae (strain ATCC 17061 / DSM 2064 / JCM 8514 / BCRC 14874 / CCUG 350202 / NBRC 14942 / NCIMB 11054 / UW101) (Cytophaga johnsonae).